The sequence spans 190 residues: UPF0301 protein PSPPH_0476 (190 aa).

This sequence belongs to the UPF0301 (AlgH) family.

The protein is UPF0301 protein PSPPH_0476 of Pseudomonas savastanoi pv. phaseolicola (strain 1448A / Race 6) (Pseudomonas syringae pv. phaseolicola (strain 1448A / Race 6)).